The following is a 557-amino-acid chain: High-affinity hexose transporter ght4 (557 aa).

At Met1–Leu9 the chain is on the cytoplasmic side. A helical transmembrane segment spans residues Val10 to Ile30. Residues Leu31–Gln58 are Extracellular-facing. A helical membrane pass occupies residues Ala59–Phe79. Over Thr80–Tyr87 the chain is Cytoplasmic. A helical membrane pass occupies residues Ser88–Pro108. The Extracellular portion of the chain corresponds to Ser109–Gln112. A helical membrane pass occupies residues Ile113–Gly133. At Tyr134–Arg144 the chain is on the cytoplasmic side. A helical membrane pass occupies residues Gly145–Ile165. The Extracellular portion of the chain corresponds to Asn166–Arg179. The chain crosses the membrane as a helical span at residues Thr180–Pro200. The Cytoplasmic segment spans residues Glu201 to Thr266. A helical membrane pass occupies residues Val267 to Phe285. The Extracellular segment spans residues Tyr286 to Phe301. The chain crosses the membrane as a helical span at residues Leu302–Ile322. Topologically, residues Asp323–Arg328 are cytoplasmic. Residues Asn329–Gly349 form a helical membrane-spanning segment. Topologically, residues Asp350–Arg363 are extracellular. A glycan (N-linked (GlcNAc...) asparagine) is linked at Asn357. Residues Ala364 to Gly384 form a helical membrane-spanning segment. At Pro385–Ala404 the chain is on the cytoplasmic side. Residues Ala405–Ile425 form a helical membrane-spanning segment. Residues Ser426–Lys432 are Extracellular-facing. A helical membrane pass occupies residues Leu433–Lys453. At Glu454–Val557 the chain is on the cytoplasmic side. A compositionally biased stretch (basic and acidic residues) spans Lys492–Glu514. The segment at Lys492–Val557 is disordered. A compositionally biased stretch (low complexity) spans Ser524–Ala536. The segment covering Asn547 to Val557 has biased composition (basic and acidic residues).

It belongs to the major facilitator superfamily. Sugar transporter (TC 2.A.1.1) family.

It is found in the membrane. The sequence is that of High-affinity hexose transporter ght4 (ght4) from Schizosaccharomyces pombe (strain 972 / ATCC 24843) (Fission yeast).